Consider the following 282-residue polypeptide: ADP-ribosyl cyclase/cyclic ADP-ribose hydrolase (282 aa).

The first 24 residues, 1–24, serve as a signal peptide directing secretion; sequence MSPVAIIACVCLAVTLTSISPSEA. Intrachain disulfides connect cysteine 39/cysteine 58, cysteine 75/cysteine 155, cysteine 136/cysteine 149, cysteine 230/cysteine 251, and cysteine 263/cysteine 272.

The protein belongs to the ADP-ribosyl cyclase family. Post-translationally, has different isoforms which may be the result of different amounts of phosphorylation. As to expression, immature occoyctes. Oocytes.

It localises to the cytoplasmic vesicle. It catalyses the reaction NAD(+) = cyclic ADP-beta-D-ribose + nicotinamide + H(+). The enzyme catalyses nicotinate + NADP(+) = nicotinate-adenine dinucleotide phosphate + nicotinamide. The catalysed reaction is 2'-phospho-cyclic ADP-ribose + nicotinate = nicotinate-adenine dinucleotide phosphate. Its activity is regulated as follows. Activity is presumably regulated by its sequestration in vesicles before egg fertilization. After fertilization and upon NADase release, it could then be regulated via its potential phosphorylation sites. In terms of biological role, synthesizes cyclic ADP-ribose (cADPR), a second messenger for calcium mobilization from endoplasmic reticulum; ADP-ribose is a minor product. Synthesizes the Ca(2+) mobilizer nicotinate-adenine dinucleotide phosphate from 2'-phospho-cADPR and nicotinic acid as well as from NADP(+) and nicotinic acid; with NADP(+) as substrate preferentially catalyzes NADP(+) hydrolysis rather than NAADP(+) synthesis, about 70-fold better at pH 7.4. Has cADPR hydrolase activity at very high enzyme concentrations, which is probably not physiological. The conversion of NAD(+) into ADP-ribose is also only observed at high enzyme concentrations and results from the hydrolysis of cADP-ribose. This is ADP-ribosyl cyclase/cyclic ADP-ribose hydrolase from Aplysia californica (California sea hare).